The sequence spans 556 residues: Formate--tetrahydrofolate ligase (556 aa).

An ATP-binding site is contributed by 65-72 (TPAGEGKS).

It belongs to the formate--tetrahydrofolate ligase family.

The catalysed reaction is (6S)-5,6,7,8-tetrahydrofolate + formate + ATP = (6R)-10-formyltetrahydrofolate + ADP + phosphate. Its pathway is one-carbon metabolism; tetrahydrofolate interconversion. In Streptococcus agalactiae serotype V (strain ATCC BAA-611 / 2603 V/R), this protein is Formate--tetrahydrofolate ligase.